Reading from the N-terminus, the 242-residue chain is UPF0246 protein SPH_1662 (242 aa).

It belongs to the UPF0246 family.

The protein is UPF0246 protein SPH_1662 of Streptococcus pneumoniae (strain Hungary19A-6).